The primary structure comprises 95 residues: Co-chaperonin GroES (95 aa).

The protein belongs to the GroES chaperonin family. In terms of assembly, heptamer of 7 subunits arranged in a ring. Interacts with the chaperonin GroEL.

It is found in the cytoplasm. In terms of biological role, together with the chaperonin GroEL, plays an essential role in assisting protein folding. The GroEL-GroES system forms a nano-cage that allows encapsulation of the non-native substrate proteins and provides a physical environment optimized to promote and accelerate protein folding. GroES binds to the apical surface of the GroEL ring, thereby capping the opening of the GroEL channel. The polypeptide is Co-chaperonin GroES (Staphylococcus haemolyticus (strain JCSC1435)).